The chain runs to 733 residues: Non-secreted LysM effector LCP1 (733 aa).

A signal peptide spans 1–22 (MMRRPWLLSALVAWVKLPSVQG). LysM domains follow at residues 211-256 (SEYT…KLCI) and 261-309 (DVYV…TICI). 9 N-linked (GlcNAc...) asparagine glycosylation sites follow: Asn298, Asn304, Asn340, Asn350, Asn381, Asn432, Asn442, Asn455, and Asn538. A LysM 3 domain is found at 347–393 (LFHNVTAGDDCGTIGLKYSISLDDFIFLNSMIWPNCTNLWLRASYCV). The span at 605–629 (SPITSSAPTSTTASSKTSSSAAQPT) shows a compositional bias: low complexity. The disordered stretch occupies residues 605–637 (SPITSSAPTSTTASSKTSSSAAQPTNVSTDGTC). Asn630 carries N-linked (GlcNAc...) asparagine glycosylation. Chitin-binding type-1 domains lie at 634 to 680 (DGTC…KCDA) and 688 to 733 (DGTC…GVCT). 8 disulfide bridges follow: Cys637/Cys654, Cys645/Cys660, Cys653/Cys667, Cys671/Cys678, Cys691/Cys708, Cys699/Cys714, Cys707/Cys721, and Cys725/Cys732.

The protein belongs to the secreted LysM effector family.

It localises to the secreted. Its subcellular location is the cell membrane. It is found in the vacuole. Functionally, secreted effector that enables the plant pathogenic fungus to manipulate host defenses for successful infection. Not involved in host recognition and penetration but suppresses host cell death and promotes fumonisin biosynthesis while the pathogen colonizes maize kernels. The polypeptide is Non-secreted LysM effector LCP1 (Gibberella moniliformis (strain M3125 / FGSC 7600) (Maize ear and stalk rot fungus)).